The primary structure comprises 337 residues: Protein ABHD13 (337 aa).

A helical; Signal-anchor for type II membrane protein transmembrane segment spans residues 30 to 50 (LLALILTFHLYGGFVLLGLIL). Active-site charge relay system residues include S193, D268, and H298. N-linked (GlcNAc...) asparagine glycosylation occurs at N299.

This sequence belongs to the serine esterase family.

The protein resides in the membrane. The protein is Protein ABHD13 of Danio rerio (Zebrafish).